Reading from the N-terminus, the 455-residue chain is Gamma-glutamyl phosphate reductase (455 aa).

It belongs to the gamma-glutamyl phosphate reductase family.

Its subcellular location is the cytoplasm. It carries out the reaction L-glutamate 5-semialdehyde + phosphate + NADP(+) = L-glutamyl 5-phosphate + NADPH + H(+). The protein operates within amino-acid biosynthesis; L-proline biosynthesis; L-glutamate 5-semialdehyde from L-glutamate: step 2/2. Its function is as follows. Catalyzes the NADPH-dependent reduction of L-glutamate 5-phosphate into L-glutamate 5-semialdehyde and phosphate. The product spontaneously undergoes cyclization to form 1-pyrroline-5-carboxylate. The protein is Gamma-glutamyl phosphate reductase of Synechococcus sp. (strain JA-2-3B'a(2-13)) (Cyanobacteria bacterium Yellowstone B-Prime).